A 414-amino-acid polypeptide reads, in one-letter code: Hydroxysqualene dehydroxylase (414 aa).

Belongs to the HpnE family.

It catalyses the reaction squalene + FAD + H2O + H(+) = hydroxysqualene + FADH2. The protein operates within secondary metabolite biosynthesis; hopanoid biosynthesis. In terms of biological role, involved in the biosynthesis of the hopanoid precursor squalene (SQ) from farnesyl diphosphate (FPP). Catalyzes the third (last) step, the reduction of hydroxysqualene (HSQ) to SQ. This Zymomonas mobilis subsp. mobilis (strain ATCC 31821 / ZM4 / CP4) protein is Hydroxysqualene dehydroxylase.